A 338-amino-acid chain; its full sequence is RAB6-interacting golgin (338 aa).

Basic and acidic residues-rich tracts occupy residues 1–14 (MTEK…DEIL) and 46–59 (RMPD…DQLR). 2 disordered regions span residues 1–109 (MTEK…LNLD) and 127–188 (ARDK…SPFK). Low complexity-rich tracts occupy residues 60 to 73 (KQQQ…IQKP) and 153 to 167 (SGGD…DDGS). Residues 192–244 (LKDFEQHRRMIEEQNKQKKQMLYQAIEQHTQKTAAESRKIEEIRHELSKLESD) are a coiled coil. The tract at residues 244–260 (DLAVDVALLRKQIDNAC) is essential for Sas-6 binding. A necessary for localization to the centrosome region spans residues 246 to 286 (AVDVALLRKQIDNACIHFANVEKQYVKIEAQFLRAKIELHN). The necessary for localization to the Golgi stretch occupies residues 246–323 (AVDVALLRKQ…TELMQKVGLS (78 aa)). Residues 260 to 286 (CIHFANVEKQYVKIEAQFLRAKIELHN) form a necessary for interaction with Sas-6 and essential for homodimerization region.

Belongs to the GORAB family. In terms of assembly, homodimer (via C-terminus); dimerization appears to be required for its trans-Golgi localization but not for its function and centriolar localization. Interacts (via C-terminus) with Rab6; binds Rab6 as a homodimer, this interaction seems to be required for trans-Golgi localization. Interacts (via C-terminus) with Sas-6; binds as a monomer to a Sas-6 homodimer.

It is found in the cytoplasm. It localises to the cytoskeleton. The protein localises to the microtubule organizing center. The protein resides in the centrosome. Its subcellular location is the centriole. It is found in the golgi apparatus. It localises to the trans-Golgi network. Functionally, required for centriole duplication likely through its interaction with Sas-6. During embryogenesis, maternally provided protein is required for centrosome duplication and nuclear division cycles of the syncytial embryos. In femoral chordotonal organs, required for sensory cilia structural integrity and functionality necessary for motor coordination. In male germline, has a role in cytokinesis which seems dependent on its localization to the Golgi. This Drosophila melanogaster (Fruit fly) protein is RAB6-interacting golgin.